A 561-amino-acid chain; its full sequence is Sesquiterpene synthase 2 (561 aa).

4 residues coordinate Mg(2+): aspartate 313, aspartate 317, aspartate 458, and glutamate 466. The DDXXD motif signature appears at 313 to 317 (DDIYD).

This sequence belongs to the terpene synthase family. Tpsa subfamily. Mn(2+) is required as a cofactor. Requires Mg(2+) as cofactor.

The protein localises to the cytoplasm. It carries out the reaction (2E,6E)-farnesyl diphosphate + H2O = kunzeaol + diphosphate. Its pathway is secondary metabolite biosynthesis; terpenoid biosynthesis. Its function is as follows. Involved in the biosynthesis of kunzeaol. Produces mainly (-)-germacrene D along with gamma-cadinene. The protein is Sesquiterpene synthase 2 (STS2) of Thapsia garganica (Deadly carrot).